Reading from the N-terminus, the 319-residue chain is 1-aminocyclopropane-1-carboxylate oxidase 4 (319 aa).

The Fe2OG dioxygenase domain maps to 153-253 (PNFGTKVSNY…RMSLASFYNP (101 aa)). Residues histidine 177, aspartate 179, and histidine 234 each coordinate Fe cation.

This sequence belongs to the iron/ascorbate-dependent oxidoreductase family. Requires Fe cation as cofactor.

It carries out the reaction 1-aminocyclopropane-1-carboxylate + L-ascorbate + O2 = ethene + L-dehydroascorbate + hydrogen cyanide + CO2 + 2 H2O. It functions in the pathway alkene biosynthesis; ethylene biosynthesis via S-adenosyl-L-methionine; ethylene from S-adenosyl-L-methionine: step 2/2. The chain is 1-aminocyclopropane-1-carboxylate oxidase 4 (ACO4) from Petunia hybrida (Petunia).